A 384-amino-acid chain; its full sequence is Mannitol-1-phosphate 5-dehydrogenase (384 aa).

3–14 (AVHFGAGNIGRG) contributes to the NAD(+) binding site.

This sequence belongs to the mannitol dehydrogenase family. As to quaternary structure, monomer.

The catalysed reaction is D-mannitol 1-phosphate + NAD(+) = beta-D-fructose 6-phosphate + NADH + H(+). This is Mannitol-1-phosphate 5-dehydrogenase (mtlD) from Enterococcus faecalis (strain ATCC 700802 / V583).